Here is a 596-residue protein sequence, read N- to C-terminus: Arrestin domain-containing protein C31A2.12 (596 aa).

Residues 194 to 211 (AYAIGSYIPIHFVLVPLL) form a helical membrane-spanning segment. Disordered regions lie at residues 363–387 (NLDTPLPSGATTPRRRDSMEPTYAS) and 405–446 (QQQP…VITR). A phosphothreonine mark is found at Thr373 and Thr374. 2 stretches are compositionally biased toward polar residues: residues 405–420 (QQQPQGRSPNEHSPSN) and 430–446 (SLGSNPSSGAASAVITR). Phosphoserine is present on residues Ser452, Ser474, Ser493, and Ser497. Positions 493–596 (SRPPSPGIVT…MLPSGFSRRN (104 aa)) are disordered. A phosphothreonine mark is found at Thr502 and Thr507. Residues 504–522 (PQRTSPSFFVSPTESTRQS) are compositionally biased toward polar residues. Ser514 bears the Phosphoserine mark. The span at 531–555 (HSTSSSSGISPSHSSASLAHLSQAS) shows a compositional bias: low complexity.

It belongs to the arrestin family.

The protein localises to the membrane. The polypeptide is Arrestin domain-containing protein C31A2.12 (Schizosaccharomyces pombe (strain 972 / ATCC 24843) (Fission yeast)).